A 330-amino-acid chain; its full sequence is 6-methylsalicylic acid decarboxylase acuB (330 aa).

Zn(2+) contacts are provided by histidine 6, histidine 8, histidine 156, and aspartate 276.

Belongs to the metallo-dependent hydrolases superfamily. ACMSD family. Monomer.

It is found in the cytoplasm. Its subcellular location is the cytosol. The catalysed reaction is 6-methylsalicylate + H(+) = 3-methylphenol + CO2. It functions in the pathway secondary metabolite biosynthesis. Functionally, 6-methylsalicylic acid decarboxylase; part of the gene cluster that mediates the biosynthesis of aculins. The pathway begins with the synthesis of 6-methylsalicylic acid by the polyketide synthase (PKS) acuA via condensation of acetate and malonate units. The 6-methylsalicylic acid decarboxylase acuB then catalyzes the decarboxylation of 6-methylsalicylic acid to yield m-cresol (also known as 3-methylphenol). These first reactions occur in the cytosol. The intermediate m-cresol is then transported into the endoplasmic reticulum where the cytochrome P450 monooxygenase acuC converts it to m-hydroxybenzyl alcohol, which is further converted to gentisyl alcohol by the cytochrome P450 monooxygenase acuD. Gentisyl alcohol is further oxidized by the oxidoreductase acuE that probably catalyzes hydroxylation of the aromatic ring. The aromatic system might then be opened by oxidation through a Baeyer-Villiger type of oxidation, which could be catalyzed by acuF, with the carboxylic acid at C-1 subsequently reduced to an aldehyde by acuG. Subsequently, a hemiacetal is formed, before the dehydrogenase acuH would reduce the double bond between C-4 and C-6. Finally, keto-enol tautomerism results in formation of aculinic acid, which exists as two diastereomers (both R/S configurations at C-1) by non-enzymatic hemiacetal formation. The carboxypeptidase acuI could be involved in the linking of aculinic acid to an aculene A moiety produced by the aculene biosynthesis cluster and which leads to the production of aculin A. AcuI may also be involved in the attachment of proline to aculinic acid to form epi-aculins A and B. The chain is 6-methylsalicylic acid decarboxylase acuB from Aspergillus aculeatus (strain ATCC 16872 / CBS 172.66 / WB 5094).